The sequence spans 211 residues: Xanthine phosphoribosyltransferase (211 aa).

2 residues coordinate xanthine: L31 and N38. 138-142 (ANGRT) is a 5-phospho-alpha-D-ribose 1-diphosphate binding site. K166 provides a ligand contact to xanthine.

This sequence belongs to the purine/pyrimidine phosphoribosyltransferase family. Xpt subfamily. Homodimer.

The protein localises to the cytoplasm. The catalysed reaction is XMP + diphosphate = xanthine + 5-phospho-alpha-D-ribose 1-diphosphate. Its pathway is purine metabolism; XMP biosynthesis via salvage pathway; XMP from xanthine: step 1/1. Its function is as follows. Converts the preformed base xanthine, a product of nucleic acid breakdown, to xanthosine 5'-monophosphate (XMP), so it can be reused for RNA or DNA synthesis. The polypeptide is Xanthine phosphoribosyltransferase (Chloroflexus aurantiacus (strain ATCC 29364 / DSM 637 / Y-400-fl)).